We begin with the raw amino-acid sequence, 88 residues long: Small ribosomal subunit protein uS17 (88 aa).

It belongs to the universal ribosomal protein uS17 family. As to quaternary structure, part of the 30S ribosomal subunit.

In terms of biological role, one of the primary rRNA binding proteins, it binds specifically to the 5'-end of 16S ribosomal RNA. This is Small ribosomal subunit protein uS17 from Prochlorococcus marinus (strain MIT 9312).